A 1456-amino-acid chain; its full sequence is RNA replication protein (1456 aa).

In terms of domain architecture, Alphavirus-like MT spans 59 to 224 (NPYSIELHTH…HHEFTDLQWL (166 aa)). Disordered stretches follow at residues 474 to 499 (DLAG…EKKE), 513 to 563 (RKHN…DLPG), and 581 to 600 (QKWE…TEII). The segment covering 480 to 489 (GNNQEETSTA) has biased composition (polar residues). The span at 513–528 (RKHNRETRSRAAKKAK) shows a compositional bias: basic residues. A compositionally biased stretch (basic and acidic residues) spans 529 to 547 (RLAEIQDSMNRDRTEEGSH). Polar residues predominate over residues 586-595 (ASSTDSSTID). One can recognise a (+)RNA virus helicase ATP-binding domain in the interval 695 to 862 (DVKNKRIGAI…VFAKYCRYYL (168 aa)). Position 735 to 742 (735 to 742 (GAGGSGKS)) interacts with ATP. A (+)RNA virus helicase C-terminal domain is found at 863-997 (NATHRNKKDL…VVREHALKEY (135 aa)). The region spanning 1236 to 1343 (RPSLANDYTA…DCVPEVKQSF (108 aa)) is the RdRp catalytic domain.

Belongs to the potexvirus/carlavirus RNA replication protein family.

The enzyme catalyses RNA(n) + a ribonucleoside 5'-triphosphate = RNA(n+1) + diphosphate. It carries out the reaction ATP + H2O = ADP + phosphate + H(+). RNA replication. The central part of this protein possibly functions as an ATP-binding helicase. In Brassica campestris (Field mustard), this protein is RNA replication protein.